Here is a 642-residue protein sequence, read N- to C-terminus: Extracellular metalloproteinase 4 (642 aa).

The signal sequence occupies residues 1 to 18; that stretch reads MHGLLLAGLLALPLNVLA. Positions 19–253 are excised as a propeptide; it reads HPTESHSSGI…VHSVVDYVSA (235 aa). The segment covering 49-60 has biased composition (polar residues); sequence SDSLTGQDGQSF. The interval 49 to 72 is disordered; the sequence is SDSLTGQDGQSFTASSADADTSSG. Residues 61–71 show a composition bias toward low complexity; sequence TASSADADTSS. An N-linked (GlcNAc...) asparagine glycan is attached at asparagine 419. Residue histidine 436 participates in Zn(2+) binding. The active site involves glutamate 437. Residue histidine 440 participates in Zn(2+) binding. N-linked (GlcNAc...) asparagine glycosylation is found at asparagine 509 and asparagine 602.

This sequence belongs to the peptidase M36 family. Zn(2+) serves as cofactor.

Its subcellular location is the secreted. Secreted metalloproteinase that allows assimilation of proteinaceous substrates and probably acts as a virulence factor. The chain is Extracellular metalloproteinase 4 (MEP4) from Arthroderma gypseum (strain ATCC MYA-4604 / CBS 118893) (Microsporum gypseum).